Reading from the N-terminus, the 559-residue chain is Cocaine esterase (559 aa).

Positions 1–26 are cleaved as a signal peptide; that stretch reads MRLHRLRARLSAVACGLLLLLVRGQG. At glutamine 27 the chain carries Pyrrolidone carboxylic acid. Cysteines 95 and 123 form a disulfide. A glycan (N-linked (GlcNAc...) asparagine) is linked at asparagine 111. The Acyl-ester intermediate role is filled by serine 228. N-linked (GlcNAc...) asparagine glycosylation is present at asparagine 276. Cysteine 280 and cysteine 291 are disulfide-bonded. Residues glutamate 345 and histidine 457 each act as charge relay system in the active site. The Prevents secretion from ER signature appears at 556-559; sequence HTEL.

This sequence belongs to the type-B carboxylesterase/lipase family. As to quaternary structure, monomer. In terms of processing, glycosylated. As to expression, preferentially expressed in intestine with moderate expression in liver. Within the intestine, highest expression is found in small intestine with lower expression in colon and rectum.

The protein localises to the endoplasmic reticulum lumen. The catalysed reaction is cocaine + H2O = ecgonine methyl ester + benzoate + H(+). It catalyses the reaction a carboxylic ester + H2O = an alcohol + a carboxylate + H(+). The enzyme catalyses 4-methylumbelliferyl acetate + H2O = 4-methylumbelliferone + acetate + H(+). It carries out the reaction 2-(5Z,8Z,11Z,14Z-eicosatetraenoyl)-glycerol + H2O = glycerol + (5Z,8Z,11Z,14Z)-eicosatetraenoate + H(+). The catalysed reaction is prostaglandin E2 1-glyceryl ester + H2O = prostaglandin E2 + glycerol + H(+). It catalyses the reaction prostaglandin F2alpha 1-glyceryl ester + H2O = prostaglandin F2alpha + glycerol + H(+). Its function is as follows. Involved in the detoxification of xenobiotics and in the activation of ester and amide prodrugs. Shows high catalytic efficiency for hydrolysis of cocaine, 4-methylumbelliferyl acetate, heroin and 6-monoacetylmorphine. Hydrolyzes aspirin, substrates with large alcohol group and small acyl group and endogenous lipids such as triacylglycerol. Converts monoacylglycerides to free fatty acids and glycerol. Hydrolyzes of 2-arachidonoylglycerol and prostaglandins. This chain is Cocaine esterase, found in Homo sapiens (Human).